The following is a 296-amino-acid chain: Ribosomal RNA small subunit methyltransferase A (296 aa).

Residues N32, L34, G59, E80, D105, and N130 each coordinate S-adenosyl-L-methionine.

It belongs to the class I-like SAM-binding methyltransferase superfamily. rRNA adenine N(6)-methyltransferase family. RsmA subfamily.

Its subcellular location is the cytoplasm. The catalysed reaction is adenosine(1518)/adenosine(1519) in 16S rRNA + 4 S-adenosyl-L-methionine = N(6)-dimethyladenosine(1518)/N(6)-dimethyladenosine(1519) in 16S rRNA + 4 S-adenosyl-L-homocysteine + 4 H(+). Functionally, specifically dimethylates two adjacent adenosines (A1518 and A1519) in the loop of a conserved hairpin near the 3'-end of 16S rRNA in the 30S particle. May play a critical role in biogenesis of 30S subunits. This is Ribosomal RNA small subunit methyltransferase A from Lactiplantibacillus plantarum (strain ATCC BAA-793 / NCIMB 8826 / WCFS1) (Lactobacillus plantarum).